The sequence spans 247 residues: Uridylate kinase (247 aa).

Residue Lys21–Gly24 coordinates ATP. A UMP-binding site is contributed by Gly63. Positions 64 and 68 each coordinate ATP. Residues Asp83 and Thr144–Thr151 each bind UMP. Thr171, Gln172, Tyr177, and Asp180 together coordinate ATP.

This sequence belongs to the UMP kinase family. As to quaternary structure, homohexamer.

Its subcellular location is the cytoplasm. The enzyme catalyses UMP + ATP = UDP + ADP. It functions in the pathway pyrimidine metabolism; CTP biosynthesis via de novo pathway; UDP from UMP (UMPK route): step 1/1. Inhibited by UTP. Its function is as follows. Catalyzes the reversible phosphorylation of UMP to UDP. This chain is Uridylate kinase, found in Rickettsia rickettsii (strain Sheila Smith).